The primary structure comprises 240 residues: Ribonuclease PH (240 aa).

Phosphate contacts are provided by residues Arg-87 and 125–127; that span reads GTR.

Belongs to the RNase PH family. As to quaternary structure, homohexameric ring arranged as a trimer of dimers.

The enzyme catalyses tRNA(n+1) + phosphate = tRNA(n) + a ribonucleoside 5'-diphosphate. In terms of biological role, phosphorolytic 3'-5' exoribonuclease that plays an important role in tRNA 3'-end maturation. Removes nucleotide residues following the 3'-CCA terminus of tRNAs; can also add nucleotides to the ends of RNA molecules by using nucleoside diphosphates as substrates, but this may not be physiologically important. Probably plays a role in initiation of 16S rRNA degradation (leading to ribosome degradation) during starvation. The polypeptide is Ribonuclease PH (Pseudomonas fluorescens (strain SBW25)).